We begin with the raw amino-acid sequence, 224 residues long: UPF0758 protein Sde_3678 (224 aa).

Residues 102-224 enclose the MPN domain; sequence SLTSTTAVKQ…AVSFAERGWI (123 aa). The Zn(2+) site is built by His173, His175, and Asp186. The short motif at 173-186 is the JAMM motif element; the sequence is HNHPSGIAEPSEPD.

The protein belongs to the UPF0758 family.

In Saccharophagus degradans (strain 2-40 / ATCC 43961 / DSM 17024), this protein is UPF0758 protein Sde_3678.